The following is a 135-amino-acid chain: MSSTEAQASKPLYGERVIAEGELICFDNPRPERPYEISIELPEFTCQCPFSGYPDFAVLRLLYQPGPRVIELKAIKLYVNSYRNCSISHEEAANKILDDLVVACDPVWMQLEADFNPRGNVHTVVRVSHGSRQPC.

C48 functions as the Thioimide intermediate in the catalytic mechanism. Catalysis depends on D55, which acts as the Proton donor. Residues 70–72 (IEL) and 89–90 (HE) contribute to the substrate site.

Belongs to the GTP cyclohydrolase I family. QueF type 1 subfamily.

It localises to the cytoplasm. The catalysed reaction is 7-aminomethyl-7-carbaguanine + 2 NADP(+) = 7-cyano-7-deazaguanine + 2 NADPH + 3 H(+). The protein operates within tRNA modification; tRNA-queuosine biosynthesis. In terms of biological role, catalyzes the NADPH-dependent reduction of 7-cyano-7-deazaguanine (preQ0) to 7-aminomethyl-7-deazaguanine (preQ1). The protein is NADPH-dependent 7-cyano-7-deazaguanine reductase of Prochlorococcus marinus (strain MIT 9303).